The sequence spans 1021 residues: DNA-directed RNA polymerase 2B, chloroplastic/mitochondrial (1021 aa).

The interval 315-337 (KKQKAEKDKQKEDGEHVTQEQEK) is disordered. Active-site residues include D722, K797, and D954.

Belongs to the phage and mitochondrial RNA polymerase family.

It is found in the plastid. It localises to the chloroplast. The protein localises to the mitochondrion. It catalyses the reaction RNA(n) + a ribonucleoside 5'-triphosphate = RNA(n+1) + diphosphate. Its function is as follows. DNA-dependent RNA polymerase catalyzes the transcription of DNA into RNA using the four ribonucleoside triphosphates as substrates. This is DNA-directed RNA polymerase 2B, chloroplastic/mitochondrial (RPOT2-TOM) from Nicotiana tabacum (Common tobacco).